Consider the following 233-residue polypeptide: Large ribosomal subunit protein uL1 (233 aa).

This sequence belongs to the universal ribosomal protein uL1 family. In terms of assembly, part of the 50S ribosomal subunit.

Its function is as follows. Binds directly to 23S rRNA. The L1 stalk is quite mobile in the ribosome, and is involved in E site tRNA release. In terms of biological role, protein L1 is also a translational repressor protein, it controls the translation of the L11 operon by binding to its mRNA. This chain is Large ribosomal subunit protein uL1, found in Brucella melitensis biotype 1 (strain ATCC 23456 / CCUG 17765 / NCTC 10094 / 16M).